A 56-amino-acid polypeptide reads, in one-letter code: Mitoregulin (56 aa).

Over 2–9 (ADVSERTL) the chain is Mitochondrial matrix. The helical transmembrane segment at 10–27 (QLSVLVAFASGVLLGWQA) threads the bilayer. The Mitochondrial intermembrane segment spans residues 28-56 (NRLRRRYLDWRKRRLQDKLAATQKKLDLA).

As to quaternary structure, interacts with mitochondrial trifunctional enzyme, a heterotetrameric complex composed of 2 HADHA subunits and 2 HADHB subunits. Interacts with cytochrome b5 reductase CYB5R3; the interaction is required to maintain cellular lipid composition and leads to stimulation of mitochondrial respiratory complex I activity. Interacts with ATP synthase subunit ATP5F1B/ATP5B.

The protein resides in the mitochondrion inner membrane. Functionally, positively regulates mitochondrial complex assembly and/or stability. Increases mitochondrial membrane potential while decreasing mitochondrial reactive oxygen species. Increases mitochondrial respiration rate. Increased mitochondrial respiratory activity promotes myogenic differentiation which facilitates muscle growth and regeneration. Increases mitochondrial calcium retention capacity. Plays a role in maintenance of cellular lipid composition through its interaction with cytochrome b5 reductase CYB5R3 which is required for mitochondrial respiratory complex I activity. Interacts with the mitochondrial trifunctional enzyme complex (MTE) and enhances fatty acid beta-oxidation. Not required for MTE formation or stability. Modulates triglyceride clearance in adipocytes through its role in regulating fatty acid beta-oxidation and lipolysis. The protein is Mitoregulin of Homo sapiens (Human).